Consider the following 999-residue polypeptide: Tyrosine-protein kinase Mer (999 aa).

Residues 1–20 form the signal peptide; that stretch reads MGPAPLPLLLGLFLPALWRR. At 21-505 the chain is on the extracellular side; sequence AITEAREEAK…PGNADPVLII (485 aa). Ig-like C2-type domains are found at residues 81 to 186 and 197 to 273; these read PQVT…EIVS and PHFT…LTVS. Residues Asn114, Asn170, Asn207, Asn215, Asn234, Asn294, Asn316, Asn329, Asn336, Asn354, Asn389, Asn395, Asn442, and Asn454 are each glycosylated (N-linked (GlcNAc...) asparagine). A disulfide bridge links Cys115 with Cys175. A disulfide bridge links Cys218 with Cys262. 2 consecutive Fibronectin type-III domains span residues 286–381 and 386–484; these read PPTE…TTEG and APLN…PAHG. The chain crosses the membrane as a helical span at residues 506–526; that stretch reads FGCFCGFILIGLILYISLAIR. Residues 527-999 lie on the Cytoplasmic side of the membrane; it reads KRVQETKFGN…DSSEGSEVLM (473 aa). Ser543 carries the post-translational modification Phosphoserine. The Protein kinase domain maps to 587–858; sequence LILGKILGEG…VLRLQLEKLL (272 aa). Residues 593 to 601 and Lys615 contribute to the ATP site; that span reads LGEGEFGSV. Asp723 (proton acceptor) is an active-site residue. Phosphotyrosine; by autocatalysis is present on residues Tyr749, Tyr753, Tyr754, and Tyr872. Ser935 carries the phosphoserine modification.

Belongs to the protein kinase superfamily. Tyr protein kinase family. AXL/UFO subfamily. As to quaternary structure, interacts (upon activation) with TNK2; stimulates TNK2 autophosphorylation. Interacts (via N-terminus) with extracellular ligands LGALS3, TUB, TULP1 and GAS6. Interacts with VAV1 in a phosphotyrosine-independent manner. Interacts with TIMD4; this interaction enhances TIMD4-mediated efferocytosis. Post-translationally, autophosphorylated on Tyr-749, Tyr-753 and Tyr-754 in the activation loop allowing full activity. Autophosphorylated on Tyr-872 leading to recruitment of downstream partners of the signaling cascade such as PLCG2. As to expression, not expressed in normal B- and T-lymphocytes but is expressed in numerous neoplastic B- and T-cell lines. Highly expressed in testis, ovary, prostate, lung, and kidney, with lower expression in spleen, small intestine, colon, and liver.

It localises to the cell membrane. It carries out the reaction L-tyrosyl-[protein] + ATP = O-phospho-L-tyrosyl-[protein] + ADP + H(+). Its function is as follows. Receptor tyrosine kinase that transduces signals from the extracellular matrix into the cytoplasm by binding to several ligands including LGALS3, TUB, TULP1 or GAS6. Regulates many physiological processes including cell survival, migration, differentiation, and phagocytosis of apoptotic cells (efferocytosis). Ligand binding at the cell surface induces autophosphorylation of MERTK on its intracellular domain that provides docking sites for downstream signaling molecules. Following activation by ligand, interacts with GRB2 or PLCG2 and induces phosphorylation of MAPK1, MAPK2, FAK/PTK2 or RAC1. MERTK signaling plays a role in various processes such as macrophage clearance of apoptotic cells, platelet aggregation, cytoskeleton reorganization and engulfment. Functions in the retinal pigment epithelium (RPE) as a regulator of rod outer segments fragments phagocytosis. Also plays an important role in inhibition of Toll-like receptors (TLRs)-mediated innate immune response by activating STAT1, which selectively induces production of suppressors of cytokine signaling SOCS1 and SOCS3. This Homo sapiens (Human) protein is Tyrosine-protein kinase Mer (MERTK).